A 339-amino-acid polypeptide reads, in one-letter code: D-alanine--D-alanine ligase (339 aa).

Residues 126 to 333 (KQVLDSAGIP…YSELVTRLVE (208 aa)) form the ATP-grasp domain. Residue 158–213 (AAELGYPLFVKPANLGSSVGISKVGSPEELDAALTLAFGLDRRVILEAMTPHKPRE) coordinates ATP. The Mg(2+) site is built by D286, E300, and N302.

Belongs to the D-alanine--D-alanine ligase family. The cofactor is Mg(2+). It depends on Mn(2+) as a cofactor.

It is found in the cytoplasm. The enzyme catalyses 2 D-alanine + ATP = D-alanyl-D-alanine + ADP + phosphate + H(+). The protein operates within cell wall biogenesis; peptidoglycan biosynthesis. Its function is as follows. Cell wall formation. In Deinococcus radiodurans (strain ATCC 13939 / DSM 20539 / JCM 16871 / CCUG 27074 / LMG 4051 / NBRC 15346 / NCIMB 9279 / VKM B-1422 / R1), this protein is D-alanine--D-alanine ligase.